We begin with the raw amino-acid sequence, 704 residues long: Non-sulfated chondroitin lyase E66 (704 aa).

An N-terminal signal peptide occupies residues 1–23; sequence MSIVLIIVIVVIFLICFLYLSNS. Residues N236 and H291 each act as proton acceptor in the active site. Y299 acts as the Proton donor in catalysis.

Belongs to the baculoviridae E66 family.

The protein localises to the virion membrane. The protein resides in the host nucleus. It is found in the host cytoplasm. Functionally, component of the polyhedra envelope. Plays an essential role in oral infectivity. May digest, with its chondroitin lyase activity, the chondroitin sulfate barrier of the peritrophic matrix of the host midgut to facilitate viral infection in the epithelial cells. The sequence is that of Non-sulfated chondroitin lyase E66 (P79) from Lepidoptera (butterflies and moths).